The chain runs to 237 residues: Glucosamine-6-phosphate deaminase (237 aa).

The active-site Proton acceptor; for enolization step is the Asp67. Asn136 functions as the For ring-opening step in the catalytic mechanism. His138 (proton acceptor; for ring-opening step) is an active-site residue. Glu143 serves as the catalytic For ring-opening step.

This sequence belongs to the glucosamine/galactosamine-6-phosphate isomerase family. NagB subfamily.

The catalysed reaction is alpha-D-glucosamine 6-phosphate + H2O = beta-D-fructose 6-phosphate + NH4(+). The protein operates within amino-sugar metabolism; N-acetylneuraminate degradation; D-fructose 6-phosphate from N-acetylneuraminate: step 5/5. Functionally, catalyzes the reversible isomerization-deamination of glucosamine 6-phosphate (GlcN6P) to form fructose 6-phosphate (Fru6P) and ammonium ion. In Lysinibacillus sphaericus (strain C3-41), this protein is Glucosamine-6-phosphate deaminase.